A 176-amino-acid chain; its full sequence is Lipoprotein signal peptidase (176 aa).

Helical transmembrane passes span 12 to 32 (WYWV…WVLT), 67 to 87 (WQKW…TIWL), and 94 to 114 (VWRL…NLID). Catalysis depends on residues D123 and D141. Residues 133–153 (HFAAFNIADSAICIGAGLIIL) form a helical membrane-spanning segment.

The protein belongs to the peptidase A8 family.

The protein resides in the cell inner membrane. The enzyme catalyses Release of signal peptides from bacterial membrane prolipoproteins. Hydrolyzes -Xaa-Yaa-Zaa-|-(S,diacylglyceryl)Cys-, in which Xaa is hydrophobic (preferably Leu), and Yaa (Ala or Ser) and Zaa (Gly or Ala) have small, neutral side chains.. It functions in the pathway protein modification; lipoprotein biosynthesis (signal peptide cleavage). Functionally, this protein specifically catalyzes the removal of signal peptides from prolipoproteins. The protein is Lipoprotein signal peptidase of Shewanella sediminis (strain HAW-EB3).